Here is a 438-residue protein sequence, read N- to C-terminus: Adenosylhomocysteinase (438 aa).

Substrate contacts are provided by threonine 61, aspartate 137, and glutamate 162. Position 163–165 (163–165 (TTT)) interacts with NAD(+). Substrate-binding residues include lysine 192 and aspartate 196. NAD(+) is bound by residues asparagine 197, 226-231 (GYGDVG), glutamate 249, asparagine 284, 305-307 (IGH), and asparagine 352.

This sequence belongs to the adenosylhomocysteinase family. The cofactor is NAD(+).

It is found in the cytoplasm. The catalysed reaction is S-adenosyl-L-homocysteine + H2O = L-homocysteine + adenosine. Its pathway is amino-acid biosynthesis; L-homocysteine biosynthesis; L-homocysteine from S-adenosyl-L-homocysteine: step 1/1. Functionally, may play a key role in the regulation of the intracellular concentration of adenosylhomocysteine. In Christiangramia forsetii (strain DSM 17595 / CGMCC 1.15422 / KT0803) (Gramella forsetii), this protein is Adenosylhomocysteinase.